The chain runs to 337 residues: AP2/ERF and B3 domain-containing transcription factor At1g50680 (337 aa).

The segment at residues 27–84 (KYKGVVQQQNGHWGAQIYADHKRIWLGTFKSADEAATAYDSASIKLRSFDANSHRNFP) is a DNA-binding region (AP2/ERF). Residues 157–271 (FQKELTPSDV…VKTLEGQRKN (115 aa)) constitute a DNA-binding region (TF-B3).

It belongs to the AP2/ERF transcription factor family. RAV subfamily.

It is found in the nucleus. Probably acts as a transcriptional activator. Binds to the GCC-box pathogenesis-related promoter element. May be involved in the regulation of gene expression by stress factors and by components of stress signal transduction pathways. The protein is AP2/ERF and B3 domain-containing transcription factor At1g50680 of Arabidopsis thaliana (Mouse-ear cress).